The following is a 419-amino-acid chain: Tyrosine--tRNA ligase (419 aa).

Residue tyrosine 34 participates in L-tyrosine binding. The short motif at 39–48 (PSGDSMHIGH) is the 'HIGH' region element. 2 residues coordinate L-tyrosine: tyrosine 168 and glutamine 172. Residues 230-234 (KFGKS) carry the 'KMSKS' region motif. Lysine 233 lines the ATP pocket. Residues 352–418 (VNLVDWLVTL…GKKKYFLVSY (67 aa)) enclose the S4 RNA-binding domain.

The protein belongs to the class-I aminoacyl-tRNA synthetase family. TyrS type 1 subfamily. Homodimer.

It is found in the cytoplasm. It catalyses the reaction tRNA(Tyr) + L-tyrosine + ATP = L-tyrosyl-tRNA(Tyr) + AMP + diphosphate + H(+). Its function is as follows. Catalyzes the attachment of tyrosine to tRNA(Tyr) in a two-step reaction: tyrosine is first activated by ATP to form Tyr-AMP and then transferred to the acceptor end of tRNA(Tyr). The protein is Tyrosine--tRNA ligase of Listeria innocua serovar 6a (strain ATCC BAA-680 / CLIP 11262).